The sequence spans 247 residues: MSRDDQLFTLWGKLNDRQKDNFLKWMKAFDVEKTYQKTSGDIFNDDFFDIFGDRLITHHFSSTQALTKTLFEHAFNDSLNESGVISSLAESRTNPGHDITIDSIKVALKTEAAKNISKSYIHVSKWMELGKGEWILELLLERFLEHLENYERIFTLRYFKISEYKFSYQLVEIPKSLLLEAKNAKLEIMSGSKQSPKPGYGYVLDENENKKFSLYFDGGAERKLQIKHLNLEHCIVHGVWDFILPPP.

The cofactor is Mg(2+). Requires K(+) as cofactor.

The enzyme catalyses Endonucleolytic cleavage of DNA to give specific double-stranded fragments with terminal 5'-phosphates.. Its function is as follows. A P subtype restriction enzyme that recognizes the double-stranded sequence 5'-CCCGGG-3' and cleaves after C-3. The polypeptide is Type II restriction enzyme SmaI (smaIR) (Serratia marcescens).